Consider the following 24-residue polypeptide: DYE-linked aldehyde dehydrogenase, alpha chain (24 aa).

In terms of assembly, heterotetramer composed of an alpha, a beta and two gamma chains. Requires Mo-molybdopterin cytosine dinucleotide as cofactor.

Active with aldehydes and formate esters as substrates. The chain is DYE-linked aldehyde dehydrogenase, alpha chain from Amycolatopsis methanolica.